A 143-amino-acid polypeptide reads, in one-letter code: Transcriptional regulator MraZ (143 aa).

SpoVT-AbrB domains are found at residues 5–47 (EYQH…SLEE) and 76–119 (AAEV…DKSK).

The protein belongs to the MraZ family. Forms oligomers.

Its subcellular location is the cytoplasm. It localises to the nucleoid. This chain is Transcriptional regulator MraZ, found in Acetivibrio thermocellus (strain ATCC 27405 / DSM 1237 / JCM 9322 / NBRC 103400 / NCIMB 10682 / NRRL B-4536 / VPI 7372) (Clostridium thermocellum).